The chain runs to 120 residues: Large ribosomal subunit protein uL18 (120 aa).

This sequence belongs to the universal ribosomal protein uL18 family. In terms of assembly, part of the 50S ribosomal subunit; part of the 5S rRNA/L5/L18/L25 subcomplex. Contacts the 5S and 23S rRNAs.

This is one of the proteins that bind and probably mediate the attachment of the 5S RNA into the large ribosomal subunit, where it forms part of the central protuberance. In Xanthobacter autotrophicus (strain ATCC BAA-1158 / Py2), this protein is Large ribosomal subunit protein uL18.